The sequence spans 345 residues: NADPH dehydrogenase (345 aa).

23–26 lines the FMN pocket; it reads SPMC. Tyrosine 28 lines the substrate pocket. FMN-binding residues include alanine 60 and glutamine 102. 164–167 provides a ligand contact to substrate; the sequence is HGAH. FMN contacts are provided by residues arginine 215 and 307–308; that span reads GR.

Belongs to the NADH:flavin oxidoreductase/NADH oxidase family. NamA subfamily. Homotetramer. It depends on FMN as a cofactor.

It catalyses the reaction A + NADPH + H(+) = AH2 + NADP(+). Its function is as follows. Catalyzes the reduction of the double bond of an array of alpha,beta-unsaturated aldehydes and ketones. It also reduces the nitro group of nitroester and nitroaromatic compounds. It could have a role in detoxification processes. In Bacillus cereus (strain G9842), this protein is NADPH dehydrogenase.